The primary structure comprises 600 residues: Repressor of filamentous growth 1 (600 aa).

Residues 1-14 (MSTAIYYSTHNNMH) are compositionally biased toward polar residues. Disordered regions lie at residues 1–59 (MSTA…NSAN), 112–160 (NGGY…TDIS), 180–200 (GIDG…NNNN), 266–337 (AEEE…SRDN), 427–549 (STTS…GYDN), and 564–600 (QQGL…QPPQ). 2 stretches are compositionally biased toward low complexity: residues 20 to 39 (TNGS…SNPN) and 47 to 59 (INNN…NSAN). Residues 131-160 (FDTSYSNQTTPTSAYTNFNNDSTHSPTDIS) show a composition bias toward polar residues. The span at 188 to 200 (NNNNNNNNNNNNN) shows a compositional bias: low complexity. Residues 212-281 (IPRPRNAFIL…NHAKKYPGYR (70 aa)) constitute a DNA-binding region (HMG box). A compositionally biased stretch (basic residues) spans 272 to 289 (NHAKKYPGYRYTPRRNGR). Residues 297–312 (KNKPLPNNKSNSISGM) show a composition bias toward low complexity. The span at 313–322 (SGSGGGGGSI) shows a compositional bias: gly residues. A compositionally biased stretch (low complexity) spans 427 to 470 (STTSTTAPTTTTTTTTNASSIGLSVPPTATTTSTSSQPTSANSQ). Polar residues predominate over residues 481–496 (PVSSTHHQSSISEIAA). The segment covering 497-506 (QQQQQQQQQQ) has biased composition (low complexity). The span at 507-547 (FMYNTNYSTIPPNNTTTMQQHSAGTGNDYSLNGNNSGNTGY) shows a compositional bias: polar residues. Low complexity-rich tracts occupy residues 564 to 574 (QQGLQVQQQGQ) and 581 to 600 (HAAQ…QPPQ).

Its subcellular location is the nucleus. Transcription regulator that functions in both the positive and negative regulation of filamentous growth, depending upon the environmental conditions. Recruits the TUP1/SSN6 general repression complex to achieve repression. Regulates genes encoding cell wall components that are specifically expressed in the filamentous forms such as HWP1, RBT1, HYR1, ECE1, ALS1, RBT4 and RBT5. This Candida albicans (strain SC5314 / ATCC MYA-2876) (Yeast) protein is Repressor of filamentous growth 1 (RFG1).